The chain runs to 193 residues: Interleukin-18 (193 aa).

Positions 1 to 36 (MAAEPVEDNCINFVAMKFIDNTLYFIAEDDENLESD) are excised as a propeptide.

It belongs to the IL-1 family. In terms of assembly, forms a ternary complex with ligand-binding receptor subunit IL18R1 and signaling receptor subunit IL18RAP at the plasma membrane. Mature IL18 first binds to IL18R1 forming a low affinity binary complex, which then interacts with IL18RAP to form a high affinity ternary complex that signals inside the cell. Interacts with cargo receptor TMED10; the interaction mediates the translocation from the cytoplasm into the ERGIC (endoplasmic reticulum-Golgi intermediate compartment) and thereby secretion. Post-translationally, the pro-IL-18 precursor is processed by CASP1, CASP4 or CASP5 to yield its mature, active form. The pro-IL-18 precursor features autoinhibitory interactions between the propeptide and the post-cleavage-site region, preventing recognition by the IL18R1 receptor. Processing by CASP1, CASP4 or CASP5 induces conformational changes to generate critical receptor-binding sites. The mature form is then secreted and released in the extracellular milieu by passing through the gasdermin-D (GSDMD) pore. In contrast, cleavage by CASP3 inactivates IL18. Expressed in ovarian carcinoma but undetectable in normal ovarian epithelial cells. Resistant to proteolytic activation by caspase-1 and -4.

Its subcellular location is the cytoplasm. The protein resides in the cytosol. It localises to the secreted. In terms of biological role, pro-inflammatory cytokine primarily involved in epithelial barrier repair, polarized T-helper 1 (Th1) cell and natural killer (NK) cell immune responses. Upon binding to IL18R1 and IL18RAP, forms a signaling ternary complex which activates NF-kappa-B, triggering synthesis of inflammatory mediators. Synergizes with IL12/interleukin-12 to induce IFNG synthesis from T-helper 1 (Th1) cells and natural killer (NK) cells. Involved in transduction of inflammation downstream of pyroptosis: its mature form is specifically released in the extracellular milieu by passing through the gasdermin-D (GSDMD) pore. The protein is Interleukin-18 of Homo sapiens (Human).